The sequence spans 230 residues: MDSIINALTSNNFQRTNTPISKPLVVHAVAGAGKTTLIQNLLPEHPNLAAQTAGSPQTPNLTGAFIRKLTCPESNKINLLDEYAALQPLKGSWDVVLADPLQHPGLALRPHFIKSVSHRLCPATTRLISKLVCPCTSSRTEESTIQFSGLFEGPLLGTVIALDQTTQALLTAHGAHFLCPTAALGLEFDTVTVVSALPLEEVADKVGLYISLSRHRSQLHVRSPPPHPSH.

The region spanning 1–114 (MDSIINALTS…GLALRPHFIK (114 aa)) is the (+)RNA virus helicase ATP-binding domain. One can recognise a (+)RNA virus helicase C-terminal domain in the interval 115–230 (SVSHRLCPAT…VRSPPPHPSH (116 aa)).

Belongs to the Tymovirales TGBp1 protein family. In terms of assembly, homodimer and homooligomer. Interacts with capsid protein. Interacts with host AGO1; this interaction targets the host protein for degradation, thereby suppressing the antiviral RNA silencing.

The protein localises to the host cytoplasm. Transports viral genome to neighboring plant cells directly through plasmosdesmata, without any budding. The movement protein allows efficient cell to cell propagation, by bypassing the host cell wall barrier. Increases plasmodesma size exclusion limit. Acts as a suppressor of RNA-mediated gene silencing, also known as post-transcriptional gene silencing (PTGS), a mechanism of plant viral defense that limits the accumulation of viral RNAs. This chain is Movement and silencing protein TGBp1, found in Plantago asiatica (P1AMV).